A 2475-amino-acid chain; its full sequence is Gellan lyase (2475 aa).

A signal peptide spans 1–35 (MRFSWKKLVSAALVMALLVGIVYPAASGRGAVASA). The region spanning 623–708 (APANVQVAIS…QPATATSPGE (86 aa)) is the Fibronectin type-III domain. Residues 1295-1518 (GAFSLTIDDN…RDQIWVGRYG (224 aa)) form the NodB homology domain. The region spanning 2111-2223 (QPGQQLELTV…VSTAVSLSDF (113 aa)) is the Cohesin domain.

In terms of processing, subject to proteolytic processing after secretion. Cleavage occurs between Gly-1205 and Leu-1206. This gives rise to a N-terminal gellan lyase of 130 kDa being the mature form of the gellan lyase. The function of C-terminal gellan lyase is not known.

It is found in the secreted. The enzyme catalyses Eliminative cleavage of beta-D-glucopyranosyl-(1-&gt;4)-beta-D-glucopyranosyluronate bonds of gellan backbone releasing tetrasaccharides containing a 4-deoxy-4,5-unsaturated D-glucopyranosyluronic acid at the non-reducing end. The tetrasaccharide produced from deacetylated gellan is beta-D-4-deoxy-Delta(4)-GlcAp-(1-&gt;4)-beta-D-Glcp-(1-&gt;4)-alpha-L-Rhap-(1-&gt;3)-beta-D-Glcp.. In terms of biological role, cleaves the glycosidic bonds of gellan backbone and releases tetrasaccharide units of glucuronyl-glucosyl-rhamnosyl-glucose with unsaturated glucuronic acid at the non-reducing terminal. The enzyme is highly specific to the heteropolysaccharide gellan, especially deacetylated gellan. This Bacillus sp protein is Gellan lyase.